Here is a 390-residue protein sequence, read N- to C-terminus: Queuine tRNA-ribosyltransferase (390 aa).

The active-site Proton acceptor is the D92. Residues 92–96, D146, Q195, and G222 each bind substrate; that span reads DSGGF. An RNA binding region spans residues 253–259; it reads GVGTPED. The Nucleophile role is filled by D272. Residues 277–281 are RNA binding; important for wobble base 34 recognition; the sequence is TRNAR. Zn(2+) is bound by residues C310, C312, C315, and H354.

The protein belongs to the queuine tRNA-ribosyltransferase family. As to quaternary structure, homodimer. Within each dimer, one monomer is responsible for RNA recognition and catalysis, while the other monomer binds to the replacement base PreQ1. It depends on Zn(2+) as a cofactor.

It catalyses the reaction 7-aminomethyl-7-carbaguanine + guanosine(34) in tRNA = 7-aminomethyl-7-carbaguanosine(34) in tRNA + guanine. It participates in tRNA modification; tRNA-queuosine biosynthesis. Catalyzes the base-exchange of a guanine (G) residue with the queuine precursor 7-aminomethyl-7-deazaguanine (PreQ1) at position 34 (anticodon wobble position) in tRNAs with GU(N) anticodons (tRNA-Asp, -Asn, -His and -Tyr). Catalysis occurs through a double-displacement mechanism. The nucleophile active site attacks the C1' of nucleotide 34 to detach the guanine base from the RNA, forming a covalent enzyme-RNA intermediate. The proton acceptor active site deprotonates the incoming PreQ1, allowing a nucleophilic attack on the C1' of the ribose to form the product. After dissociation, two additional enzymatic reactions on the tRNA convert PreQ1 to queuine (Q), resulting in the hypermodified nucleoside queuosine (7-(((4,5-cis-dihydroxy-2-cyclopenten-1-yl)amino)methyl)-7-deazaguanosine). The polypeptide is Queuine tRNA-ribosyltransferase (Paracidovorax citrulli (strain AAC00-1) (Acidovorax citrulli)).